We begin with the raw amino-acid sequence, 299 residues long: Hydrogenase maturation factor HypB (299 aa).

Cys2, Cys5, and Cys7 together coordinate Ni(2+). Residues 18–57 (EVGDDGHGHHHHDGHHDHDHDHDHHRGDHEHDDHHHAEDG) are disordered. Over residues 31–57 (GHHDHDHDHDHHRGDHEHDDHHHAEDG) the composition is skewed to basic and acidic residues. A G-domain region spans residues 107–268 (ALNFVSSPGS…LRVNPRLQTL (162 aa)). Residues Cys167, His168, and Cys199 each contribute to the Ni(2+) site. Residues Cys167, His168, and Cys199 each contribute to the Zn(2+) site.

Belongs to the SIMIBI class G3E GTPase family. HypB/HupM subfamily.

Functionally, involved in the maturation of [NiFe] hydrogenases. Required for nickel insertion into the metal center of the hydrogenase. Exhibits a low intrinsic GTPase activity, which is essential for nickel insertion. Is able to bind 4 nickel ions per subunit. Can also bind zinc. This Rhizobium leguminosarum bv. viciae protein is Hydrogenase maturation factor HypB.